A 437-amino-acid polypeptide reads, in one-letter code: Trigger factor (437 aa).

In terms of domain architecture, PPIase FKBP-type spans 163–248 (GHMVTIDYAF…LNEIKRKELP (86 aa)).

It belongs to the FKBP-type PPIase family. Tig subfamily.

The protein localises to the cytoplasm. It carries out the reaction [protein]-peptidylproline (omega=180) = [protein]-peptidylproline (omega=0). Functionally, involved in protein export. Acts as a chaperone by maintaining the newly synthesized protein in an open conformation. Functions as a peptidyl-prolyl cis-trans isomerase. This is Trigger factor from Pelobacter propionicus (strain DSM 2379 / NBRC 103807 / OttBd1).